The chain runs to 347 residues: NADH-ubiquinone oxidoreductase chain 2 (347 aa).

Helical transmembrane passes span 2-22, 26-46, 60-80, 94-114, 127-147, 151-171, 179-197, 201-223, 242-262, 274-294, and 325-345; these read LSPL…LVTF, SWIL…PLMA, YFIA…LAAW, IILN…PMHF, TGMI…IQIA, NNAF…WGGL, IIAY…MAPF, ITWV…LNTL, MLLL…GFTN, NLVI…FFYT, and LMTM…AIFI.

The protein belongs to the complex I subunit 2 family.

The protein localises to the mitochondrion inner membrane. It catalyses the reaction a ubiquinone + NADH + 5 H(+)(in) = a ubiquinol + NAD(+) + 4 H(+)(out). Core subunit of the mitochondrial membrane respiratory chain NADH dehydrogenase (Complex I) that is believed to belong to the minimal assembly required for catalysis. Complex I functions in the transfer of electrons from NADH to the respiratory chain. The immediate electron acceptor for the enzyme is believed to be ubiquinone. In Lampetra fluviatilis (European river lamprey), this protein is NADH-ubiquinone oxidoreductase chain 2 (MT-ND2).